The chain runs to 333 residues: SKIGINGFGRIGRLVLRAALEMGAQVVAVNDPFIALEYMVYMFKYDSTHGMFKGEVKAEDGALVVDGKKITVFNEMKPENIPWSKAGAEYIVESTGVFTTIEKASAHFKGGAKKVIISAPSADAPMFVCGVNLEKYSKDMKVVSNASCTTNCLAPVAKVLHENFEIVEGLMTTVHAVTATQKTVDGPSAKDWRGGRGAAQNIIPSSTGAAKAVGKVIPELDGKLTGMAFRVPTPNVSVVDLTVRLGKECSYDDIKAAMKAASEGPLQGVLGYTEDDVVSCDFTGDNRSSIFDAKAGIQLSKTFVKVVSWYDNEFGYSQRVIDLIKHMQKVDSA.

S1 is subject to N-acetylserine. Residues 10–11 (RI), D31, and M76 each bind NAD(+). D-glyceraldehyde 3-phosphate contacts are provided by residues 147–149 (SCT), T178, 207–208 (TG), and R230. Catalysis depends on C148, which acts as the Nucleophile. Residue N312 coordinates NAD(+).

The protein belongs to the glyceraldehyde-3-phosphate dehydrogenase family. Homotetramer.

Its subcellular location is the cytoplasm. It carries out the reaction D-glyceraldehyde 3-phosphate + phosphate + NAD(+) = (2R)-3-phospho-glyceroyl phosphate + NADH + H(+). Its pathway is carbohydrate degradation; glycolysis; pyruvate from D-glyceraldehyde 3-phosphate: step 1/5. The chain is Glyceraldehyde-3-phosphate dehydrogenase from Panulirus versicolor (Painted spiny lobster).